The chain runs to 873 residues: Bifunctional uridylyltransferase/uridylyl-removing enzyme (873 aa).

The uridylyltransferase stretch occupies residues 1-332 (MAFQSPLTFN…NGGETEPAVI (332 aa)). Residues 333–692 (INEDFQRRGR…MSKKATRGGT (360 aa)) are uridylyl-removing. The HD domain occupies 451–573 (VDEHSVRLLN…VRDEERLEYL (123 aa)). ACT domains follow at residues 693–773 (EVFV…VKTR) and 800–873 (LMEL…ELAP).

This sequence belongs to the GlnD family. Requires Mg(2+) as cofactor.

It carries out the reaction [protein-PII]-L-tyrosine + UTP = [protein-PII]-uridylyl-L-tyrosine + diphosphate. The catalysed reaction is [protein-PII]-uridylyl-L-tyrosine + H2O = [protein-PII]-L-tyrosine + UMP + H(+). With respect to regulation, uridylyltransferase (UTase) activity is inhibited by glutamine, while glutamine activates uridylyl-removing (UR) activity. Its function is as follows. Modifies, by uridylylation and deuridylylation, the PII regulatory proteins (GlnB and homologs), in response to the nitrogen status of the cell that GlnD senses through the glutamine level. Under low glutamine levels, catalyzes the conversion of the PII proteins and UTP to PII-UMP and PPi, while under higher glutamine levels, GlnD hydrolyzes PII-UMP to PII and UMP (deuridylylation). Thus, controls uridylylation state and activity of the PII proteins, and plays an important role in the regulation of nitrogen assimilation and metabolism. In Vibrio vulnificus (strain YJ016), this protein is Bifunctional uridylyltransferase/uridylyl-removing enzyme.